Reading from the N-terminus, the 426-residue chain is DNA polymerase processivity factor component OPG148 (426 aa).

This sequence belongs to the orthopoxvirus OPG148 family. As to quaternary structure, interacts with the DNA polymerase catalytic subunit OPG071. Interacts with UDG/OPG116. Component of the uracil-DNA glycosylase(UDG)-OPG148-polymerase complex; OPG148 and UDG form a heterodimeric processivity factor that associates with OPG071 to form the processive polymerase holoenzyme. Interacts with OPG117.

Functionally, plays an essential role in viral DNA replication by acting as the polymerase processivity factor together with protein OPG116. Serves as a bridge which links the DNA polymerase OPG071 and the uracil DNA glycosylase. The chain is DNA polymerase processivity factor component OPG148 (OPG148) from Variola virus (isolate Human/India/Ind3/1967) (VARV).